The chain runs to 298 residues: Inosose dehydratase (298 aa).

Belongs to the IolE/MocC family. Glutathione is required as a cofactor. It depends on Co(2+) as a cofactor. Mn(2+) serves as cofactor.

The catalysed reaction is scyllo-inosose = 3D-3,5/4-trihydroxycyclohexane-1,2-dione + H2O. The protein operates within polyol metabolism; myo-inositol degradation into acetyl-CoA; acetyl-CoA from myo-inositol: step 2/7. Functionally, catalyzes the dehydration of inosose (2-keto-myo-inositol, 2KMI or 2,4,6/3,5-pentahydroxycyclohexanone) to 3D-(3,5/4)-trihydroxycyclohexane-1,2-dione (D-2,3-diketo-4-deoxy-epi-inositol). The sequence is that of Inosose dehydratase from Clostridium botulinum (strain Eklund 17B / Type B).